The sequence spans 183 residues: MDVLELYRRTGALLEGHFLLRSGMHSPFFLQSAALLQHPLYAEAVGEALGKLFEDEKVDFVIAPAIGGVVLSFVVAKALGARALFAEKDGRGGMLIRKGLTVNPGDRFLAVEDVVTTGESVRKAIRAAEARGGVLVGVGAIVDRSGGRAAFGVPFRALLALEVPQYPEEACPLCREGVPLEEV.

Residues Arg21, Lys88, and 112–120 (EDVVTTGES) contribute to the 5-phospho-alpha-D-ribose 1-diphosphate site. Residues Thr116 and Arg144 each coordinate orotate.

The protein belongs to the purine/pyrimidine phosphoribosyltransferase family. PyrE subfamily. As to quaternary structure, homodimer. The cofactor is Mg(2+).

It catalyses the reaction orotidine 5'-phosphate + diphosphate = orotate + 5-phospho-alpha-D-ribose 1-diphosphate. Its pathway is pyrimidine metabolism; UMP biosynthesis via de novo pathway; UMP from orotate: step 1/2. Catalyzes the transfer of a ribosyl phosphate group from 5-phosphoribose 1-diphosphate to orotate, leading to the formation of orotidine monophosphate (OMP). The protein is Orotate phosphoribosyltransferase of Thermus thermophilus (strain ATCC BAA-163 / DSM 7039 / HB27).